The following is an 86-amino-acid chain: Small ribosomal subunit protein bS18 (86 aa).

Belongs to the bacterial ribosomal protein bS18 family. As to quaternary structure, part of the 30S ribosomal subunit. Forms a tight heterodimer with protein bS6.

In terms of biological role, binds as a heterodimer with protein bS6 to the central domain of the 16S rRNA, where it helps stabilize the platform of the 30S subunit. The sequence is that of Small ribosomal subunit protein bS18 from Campylobacter lari (strain RM2100 / D67 / ATCC BAA-1060).